We begin with the raw amino-acid sequence, 248 residues long: MPRFLNGWLTDVVQASLSRPKIEKVRDRPIFSLKKSIISAKNSGLNPIIAEYKRRSPSGINVDINIIEYVKFMENNGATGISVLTEEKFFNGSYNDLELVAKNVKLPILMKDFVVSEKQIDSAYNIGADVILLIAKILTERELVSLYKYAKSYGLEAIVEISDEEDLDVALRGNYDFIGVNARNLESLEVSLDRTKKLLQMIPKDRLKIAESGISTRQDIEELRASGADAFLIGTSLLKDQNKIKELI.

Belongs to the TrpC family.

It catalyses the reaction 1-(2-carboxyphenylamino)-1-deoxy-D-ribulose 5-phosphate + H(+) = (1S,2R)-1-C-(indol-3-yl)glycerol 3-phosphate + CO2 + H2O. The protein operates within amino-acid biosynthesis; L-tryptophan biosynthesis; L-tryptophan from chorismate: step 4/5. The protein is Indole-3-glycerol phosphate synthase of Sulfolobus acidocaldarius (strain ATCC 33909 / DSM 639 / JCM 8929 / NBRC 15157 / NCIMB 11770).